Reading from the N-terminus, the 153-residue chain is MQNMNEQQEQWQERVIQIRRVAKVVKGGKKLSFRVLVVVGNLNGCVGVGMGKAADVMSAVTKAVVDAKKQLINITLTPTNSIVHASQGRFSAAVVFLKPAASGSGVIAGGAVRSVMELAGIQNVLSKQLGGSNPLNNAKAALLALKSSSANAR.

One can recognise an S5 DRBM domain in the interval 11–74 (WQERVIQIRR…VDAKKQLINI (64 aa)).

Belongs to the universal ribosomal protein uS5 family. Part of the 30S ribosomal subunit. Contacts protein S4.

The protein localises to the plastid. It is found in the chloroplast. Its function is as follows. With S4 and S12 plays an important role in translational accuracy. This Cyanidioschyzon merolae (strain NIES-3377 / 10D) (Unicellular red alga) protein is Small ribosomal subunit protein uS5c (rps5).